Here is a 239-residue protein sequence, read N- to C-terminus: Endonuclease V (239 aa).

Mg(2+)-binding residues include Asp50 and Asp118.

It belongs to the endonuclease V family. It depends on Mg(2+) as a cofactor.

It localises to the cytoplasm. The catalysed reaction is Endonucleolytic cleavage at apurinic or apyrimidinic sites to products with a 5'-phosphate.. In terms of biological role, DNA repair enzyme involved in the repair of deaminated bases. Selectively cleaves double-stranded DNA at the second phosphodiester bond 3' to a deoxyinosine leaving behind the intact lesion on the nicked DNA. The sequence is that of Endonuclease V from Xylella fastidiosa (strain Temecula1 / ATCC 700964).